The sequence spans 289 residues: ATP synthase gamma chain (289 aa).

The protein belongs to the ATPase gamma chain family. As to quaternary structure, F-type ATPases have 2 components, CF(1) - the catalytic core - and CF(0) - the membrane proton channel. CF(1) has five subunits: alpha(3), beta(3), gamma(1), delta(1), epsilon(1). CF(0) has three main subunits: a, b and c.

It is found in the cell inner membrane. Produces ATP from ADP in the presence of a proton gradient across the membrane. The gamma chain is believed to be important in regulating ATPase activity and the flow of protons through the CF(0) complex. This is ATP synthase gamma chain from Phocaeicola vulgatus (strain ATCC 8482 / DSM 1447 / JCM 5826 / CCUG 4940 / NBRC 14291 / NCTC 11154) (Bacteroides vulgatus).